The chain runs to 204 residues: Imidazoleglycerol-phosphate dehydratase (204 aa).

This sequence belongs to the imidazoleglycerol-phosphate dehydratase family.

The protein localises to the cytoplasm. The enzyme catalyses D-erythro-1-(imidazol-4-yl)glycerol 3-phosphate = 3-(imidazol-4-yl)-2-oxopropyl phosphate + H2O. It functions in the pathway amino-acid biosynthesis; L-histidine biosynthesis; L-histidine from 5-phospho-alpha-D-ribose 1-diphosphate: step 6/9. The polypeptide is Imidazoleglycerol-phosphate dehydratase (Rhodococcus opacus (strain B4)).